Consider the following 301-residue polypeptide: GTPase Era (301 aa).

One can recognise an Era-type G domain in the interval 7–175; that stretch reads YCGFIAIVGR…AGIVRKHLPE (169 aa). The segment at 15–22 is G1; the sequence is GRPNVGKS. 15 to 22 provides a ligand contact to GTP; it reads GRPNVGKS. The interval 41–45 is G2; sequence QTTRH. Positions 62-65 are G3; the sequence is DTPG. Residues 62-66 and 124-127 each bind GTP; these read DTPGL and NKVD. Residues 124–127 are G4; sequence NKVD. The interval 154-156 is G5; the sequence is ISA. A KH type-2 domain is found at 206 to 283; sequence LGAELPYSVT…HLELWVKVKS (78 aa).

It belongs to the TRAFAC class TrmE-Era-EngA-EngB-Septin-like GTPase superfamily. Era GTPase family. Monomer.

The protein localises to the cytoplasm. It is found in the cell inner membrane. Functionally, an essential GTPase that binds both GDP and GTP, with rapid nucleotide exchange. Plays a role in 16S rRNA processing and 30S ribosomal subunit biogenesis and possibly also in cell cycle regulation and energy metabolism. The protein is GTPase Era of Salmonella agona (strain SL483).